A 135-amino-acid polypeptide reads, in one-letter code: Galectin-1 (135 aa).

Ala-2 carries the N-acetylalanine modification. One can recognise a Galectin domain in the interval 4–135; that stretch reads GLVASNLNLK…DFKIKCVAFD (132 aa). Lys-13 and Lys-29 each carry N6-acetyllysine. Ser-30 bears the Phosphoserine; by FAM20C mark. Residues 45–49, His-53, Asn-62, and 69–72 each bind a beta-D-galactoside; these read HFNPR and WGTE. Position 108 is an N6-acetyllysine; alternate (Lys-108). Lys-108 is modified (N6-succinyllysine; alternate). Lys-128 bears the N6-acetyllysine mark.

As to quaternary structure, homodimer. Binds LGALS3BP. Interacts with CD2, CD3, CD4, CD6, CD7, CD43, ALCAM and CD45. Interacts with laminin (via poly-N-acetyllactosamine). Interacts with SUSD2. Interacts with cargo receptor TMED10; the interaction mediates the translocation from the cytoplasm into the ERGIC (endoplasmic reticulum-Golgi intermediate compartment) and thereby secretion. Interacts with CD69. Expressed in placenta, maternal decidua and fetal membranes. Within placenta, expressed in trophoblasts, stromal cells, villous endothelium, syncytiotrophoblast apical membrane and villous stroma. Within fetal membranes, expressed in amnion, chorioamniotic mesenchyma and chorion (at protein level). Expressed in cardiac, smooth, and skeletal muscle, neurons, thymus, kidney and hematopoietic cells.

The protein localises to the secreted. It is found in the extracellular space. Its subcellular location is the extracellular matrix. It localises to the cytoplasm. In terms of biological role, lectin that binds beta-galactoside and a wide array of complex carbohydrates. Plays a role in regulating apoptosis, cell proliferation and cell differentiation. Inhibits CD45 protein phosphatase activity and therefore the dephosphorylation of Lyn kinase. Strong inducer of T-cell apoptosis. Plays a negative role in Th17 cell differentiation via activation of the receptor CD69. The polypeptide is Galectin-1 (Homo sapiens (Human)).